A 172-amino-acid chain; its full sequence is MNSDKLVAIGKIAGTYGYAGWLKVIPLTDFPERFYKLDKVILNQGGKLGTFLVDGLKAHNNFYLFKFSGIDTVEVAQGFQNGILQIDESELYPLPEGYFYHFQLQGLSVYDEEKGLLGELTDIIETGANDVYVVDSPQYGEILIPAIKDVILAVKLEEKRMEIKLLPGLIED.

The 74-residue stretch at E96–L169 folds into the PRC barrel domain.

It belongs to the RimM family. As to quaternary structure, binds ribosomal protein uS19.

It localises to the cytoplasm. In terms of biological role, an accessory protein needed during the final step in the assembly of 30S ribosomal subunit, possibly for assembly of the head region. Essential for efficient processing of 16S rRNA. May be needed both before and after RbfA during the maturation of 16S rRNA. It has affinity for free ribosomal 30S subunits but not for 70S ribosomes. The sequence is that of Ribosome maturation factor RimM from Syntrophomonas wolfei subsp. wolfei (strain DSM 2245B / Goettingen).